We begin with the raw amino-acid sequence, 325 residues long: MPGSPDPAPPELASVTARAPAKVNLLLQVGPRRDDGYHDLVTVFQAVSLHEEVTVTPADEFGITVEGVGGTDVGGVPLDGTNLALRAARLLAERAGVDRAVHVHVRKEVPVAGGMAGGSADAAAALVACDSLWRLRLGLDALAELGAELGSDVPFGLHGRTAVGTGRGEHLVPVLTGASSAWVFVLAEGGLSTPAVFAECDRRREATGHDAPPGRLEAVEAALRGGDVDALGAALSNDLQDAACALDPALAGTVAAGRRAGAVAGIVSGSGPTVALLARSPAAARRLALDLEPLFGAERLRTATGPAPGARVLEAVSTPSPGGRS.

Residue Lys-22 is part of the active site. Residue 110-120 (PVAGGMAGGSA) participates in ATP binding. Asp-152 is a catalytic residue. The tract at residues 306–325 (PAPGARVLEAVSTPSPGGRS) is disordered.

This sequence belongs to the GHMP kinase family. IspE subfamily.

It carries out the reaction 4-CDP-2-C-methyl-D-erythritol + ATP = 4-CDP-2-C-methyl-D-erythritol 2-phosphate + ADP + H(+). It participates in isoprenoid biosynthesis; isopentenyl diphosphate biosynthesis via DXP pathway; isopentenyl diphosphate from 1-deoxy-D-xylulose 5-phosphate: step 3/6. Catalyzes the phosphorylation of the position 2 hydroxy group of 4-diphosphocytidyl-2C-methyl-D-erythritol. The chain is 4-diphosphocytidyl-2-C-methyl-D-erythritol kinase from Kineococcus radiotolerans (strain ATCC BAA-149 / DSM 14245 / SRS30216).